A 206-amino-acid chain; its full sequence is Ribosomal RNA large subunit methyltransferase E (206 aa).

Positions 60, 62, 80, 96, and 121 each coordinate S-adenosyl-L-methionine. The active-site Proton acceptor is Lys-161.

The protein belongs to the class I-like SAM-binding methyltransferase superfamily. RNA methyltransferase RlmE family.

The protein localises to the cytoplasm. The catalysed reaction is uridine(2552) in 23S rRNA + S-adenosyl-L-methionine = 2'-O-methyluridine(2552) in 23S rRNA + S-adenosyl-L-homocysteine + H(+). Functionally, specifically methylates the uridine in position 2552 of 23S rRNA at the 2'-O position of the ribose in the fully assembled 50S ribosomal subunit. This chain is Ribosomal RNA large subunit methyltransferase E, found in Legionella pneumophila (strain Paris).